A 110-amino-acid chain; its full sequence is Protein RnfH (110 aa).

Residues 86–110 (RQRRVEKTRKAGSIEGRRWQNKDSR) are disordered. Over residues 100 to 110 (EGRRWQNKDSR) the composition is skewed to basic and acidic residues.

Belongs to the UPF0125 (RnfH) family.

The polypeptide is Protein RnfH (Paraburkholderia xenovorans (strain LB400)).